A 446-amino-acid polypeptide reads, in one-letter code: Probable glycine dehydrogenase (decarboxylating) subunit 1 (446 aa).

It belongs to the GcvP family. N-terminal subunit subfamily. In terms of assembly, the glycine cleavage system is composed of four proteins: P, T, L and H. In this organism, the P 'protein' is a heterodimer of two subunits.

It catalyses the reaction N(6)-[(R)-lipoyl]-L-lysyl-[glycine-cleavage complex H protein] + glycine + H(+) = N(6)-[(R)-S(8)-aminomethyldihydrolipoyl]-L-lysyl-[glycine-cleavage complex H protein] + CO2. In terms of biological role, the glycine cleavage system catalyzes the degradation of glycine. The P protein binds the alpha-amino group of glycine through its pyridoxal phosphate cofactor; CO(2) is released and the remaining methylamine moiety is then transferred to the lipoamide cofactor of the H protein. This chain is Probable glycine dehydrogenase (decarboxylating) subunit 1, found in Thermococcus onnurineus (strain NA1).